The chain runs to 346 residues: Ribonucleoside-diphosphate reductase subunit beta (346 aa).

Fe cation-binding residues include Glu89, Glu120, and His123. The active site involves Tyr129. Fe cation-binding residues include Glu193, Glu227, and His230.

The protein belongs to the ribonucleoside diphosphate reductase small chain family. In terms of assembly, tetramer of two alpha and two beta subunits. Fe cation is required as a cofactor.

It carries out the reaction a 2'-deoxyribonucleoside 5'-diphosphate + [thioredoxin]-disulfide + H2O = a ribonucleoside 5'-diphosphate + [thioredoxin]-dithiol. Provides the precursors necessary for DNA synthesis. Catalyzes the biosynthesis of deoxyribonucleotides from the corresponding ribonucleotides. The chain is Ribonucleoside-diphosphate reductase subunit beta (nrdB) from Chlamydia muridarum (strain MoPn / Nigg).